Consider the following 181-residue polypeptide: MSFQEVWEKEPMKKPRIQKITVNFGVGEAGDRLTIGAKVIEELTGQSPVRTLAKQTNPAYGIRKKLPIGLKVTLRGKNAEEFLKNAFTAFKACGKVLYASSFDQVGNFSFGVPEHIDFPGQKYDPSVGIYGMDVCVTFDKAGYRVKSRKLKRSHIPKKHLVTKDEAIEYIQTKFDTEVVRE.

It belongs to the universal ribosomal protein uL5 family. In terms of assembly, part of the 50S ribosomal subunit; contacts the 5S rRNA and probably tRNA. Forms a bridge to the 30S subunit in the 70S ribosome.

Functionally, this is one of the proteins that bind and probably mediate the attachment of the 5S RNA into the large ribosomal subunit, where it forms part of the central protuberance. In the 70S ribosome it contacts protein S13 of the 30S subunit (bridge B1b), connecting the 2 subunits; this bridge is implicated in subunit movement. May contact the P site tRNA; the 5S rRNA and some of its associated proteins might help stabilize positioning of ribosome-bound tRNAs. The chain is Large ribosomal subunit protein uL5 from Methanococcus maripaludis (strain C5 / ATCC BAA-1333).